Reading from the N-terminus, the 319-residue chain is GCN5-related N-acetyltransferase 5, chloroplastic (319 aa).

The transit peptide at 1 to 55 (MAALSISLAFSVDSLKPTQSTKFGFSSSSHRYPLLYSCKSHRSNLRFAFPPSSVS) directs the protein to the chloroplast. Residues 109–297 (MWVRVMRHEE…KHLMRKKLLP (189 aa)) form the N-acetyltransferase domain. Acetyl-CoA contacts are provided by residues 218–220 (MTV), 226–231 (RRGIGW), 258–260 (DEA), and Y265. Y265 acts as the Proton donor in catalysis.

This sequence belongs to the acetyltransferase family. GNAT subfamily. Oligomer. In terms of processing, autoacetylated. As to expression, expressed in green tissues.

The protein localises to the plastid. The protein resides in the chloroplast. The catalysed reaction is an N-terminal L-alpha-aminoacyl-[protein] + acetyl-CoA = N-terminal N(alpha)-acetyl-L-alpha-aminoacyl-[protein] + CoA + H(+). The enzyme catalyses L-lysyl-[protein] + acetyl-CoA = N(6)-acetyl-L-lysyl-[protein] + CoA + H(+). It catalyses the reaction N-terminal L-alanyl-[protein] + acetyl-CoA = N-terminal N(alpha)-acetyl-L-alanyl-[protein] + CoA + H(+). It carries out the reaction N-terminal L-seryl-[protein] + acetyl-CoA = N-terminal N(alpha)-acetyl-L-seryl-[protein] + CoA + H(+). The catalysed reaction is N-terminal L-methionyl-[protein] + acetyl-CoA = N-terminal N(alpha)-acetyl-L-methionyl-[protein] + CoA + H(+). The enzyme catalyses N-terminal L-valyl-[protein] + acetyl-CoA = N-terminal N(alpha)-acetyl-L-valyl-[protein] + CoA + H(+). It catalyses the reaction N-terminal L-threonyl-[protein] + acetyl-CoA = N-terminal N(alpha)-acetyl-L-threonyl-[protein] + CoA + H(+). Functionally, protein acetyltransferase with dual specificity triggering both N-alpha-acetylation (NTA), with a large spectrum of modified N-termini, including methionine, alanine, serine and to a lower extent threonine and valine as substrates, and epsilon-lysine acetylation (KA). This Arabidopsis thaliana (Mouse-ear cress) protein is GCN5-related N-acetyltransferase 5, chloroplastic.